A 753-amino-acid chain; its full sequence is 5-methyltetrahydropteroyltriglutamate--homocysteine methyltransferase (753 aa).

Residues 17-20 (RELK) and K117 each bind 5-methyltetrahydropteroyltri-L-glutamate. L-homocysteine contacts are provided by residues 431 to 433 (IGS) and E484. Residues 431 to 433 (IGS) and E484 each bind L-methionine. 5-methyltetrahydropteroyltri-L-glutamate-binding positions include 515–516 (RC) and W561. D599 lines the L-homocysteine pocket. D599 is a binding site for L-methionine. A 5-methyltetrahydropteroyltri-L-glutamate-binding site is contributed by E605. Residues H641, C643, and E665 each coordinate Zn(2+). H694 serves as the catalytic Proton donor. Zn(2+) is bound at residue C726.

The protein belongs to the vitamin-B12 independent methionine synthase family. Zn(2+) is required as a cofactor.

The enzyme catalyses 5-methyltetrahydropteroyltri-L-glutamate + L-homocysteine = tetrahydropteroyltri-L-glutamate + L-methionine. The protein operates within amino-acid biosynthesis; L-methionine biosynthesis via de novo pathway; L-methionine from L-homocysteine (MetE route): step 1/1. Its function is as follows. Catalyzes the transfer of a methyl group from 5-methyltetrahydrofolate to homocysteine resulting in methionine formation. The polypeptide is 5-methyltetrahydropteroyltriglutamate--homocysteine methyltransferase (Escherichia coli O157:H7).